The chain runs to 893 residues: Alanine--tRNA ligase (893 aa).

Residues histidine 573, histidine 577, cysteine 676, and histidine 680 each contribute to the Zn(2+) site. The segment at 853–872 (LGGGGGGKDDLAQGGGQDPS) is disordered.

It belongs to the class-II aminoacyl-tRNA synthetase family. The cofactor is Zn(2+).

Its subcellular location is the cytoplasm. The enzyme catalyses tRNA(Ala) + L-alanine + ATP = L-alanyl-tRNA(Ala) + AMP + diphosphate. Functionally, catalyzes the attachment of alanine to tRNA(Ala) in a two-step reaction: alanine is first activated by ATP to form Ala-AMP and then transferred to the acceptor end of tRNA(Ala). Also edits incorrectly charged Ser-tRNA(Ala) and Gly-tRNA(Ala) via its editing domain. This Kineococcus radiotolerans (strain ATCC BAA-149 / DSM 14245 / SRS30216) protein is Alanine--tRNA ligase.